The chain runs to 706 residues: Elongation factor G (706 aa).

Residues L15–V291 form the tr-type G domain. GTP-binding positions include A24–T31, D91–H95, and N145–D148.

Belongs to the TRAFAC class translation factor GTPase superfamily. Classic translation factor GTPase family. EF-G/EF-2 subfamily.

Its subcellular location is the cytoplasm. Its function is as follows. Catalyzes the GTP-dependent ribosomal translocation step during translation elongation. During this step, the ribosome changes from the pre-translocational (PRE) to the post-translocational (POST) state as the newly formed A-site-bound peptidyl-tRNA and P-site-bound deacylated tRNA move to the P and E sites, respectively. Catalyzes the coordinated movement of the two tRNA molecules, the mRNA and conformational changes in the ribosome. The chain is Elongation factor G from Leptospira interrogans serogroup Icterohaemorrhagiae serovar copenhageni (strain Fiocruz L1-130).